The following is a 249-amino-acid chain: MTVYFIGAGPGAADLITVRAQRIIAASPVCLYAGSLVPQELLAECPEGARVIDTARLSLDEIVALLIEADAAGQDVARLHSGDPSIFSAVAEQVRRLESAGVAYQVVPGVPAFTAAAASLGRELTVPGVSQSIVLTRVSTLSTAMPEGEDLRSLGRSGATMVVHLGAHRIDQIAEELIEDYGRDCPAAVVAFASRPDEIVLRGTLATIADQVKAAGVTKTAVVIVGRVLAAEGFPDSYLYSATRERTTH.

The protein belongs to the precorrin methyltransferase family.

The enzyme catalyses precorrin-4 + S-adenosyl-L-methionine = precorrin-5 + S-adenosyl-L-homocysteine. Its pathway is cofactor biosynthesis; adenosylcobalamin biosynthesis; cob(II)yrinate a,c-diamide from precorrin-2 (aerobic route): step 4/10. Catalyzes the methylation of C-11 in precorrin-4 to form precorrin-5. In Rhodococcus erythropolis (Arthrobacter picolinophilus), this protein is Precorrin-4 C(11)-methyltransferase (cobM).